A 377-amino-acid polypeptide reads, in one-letter code: Chaperone protein DnaJ (377 aa).

A J domain is found at 5 to 70 (DYYEVLGVGR…NKKAAYDQFG (66 aa)). The CR-type zinc finger occupies 133–211 (GLTKELRIPT…CHGDGRVEKT (79 aa)). Zn(2+) is bound by residues cysteine 146, cysteine 149, cysteine 163, cysteine 166, cysteine 185, cysteine 188, cysteine 199, and cysteine 202. CXXCXGXG motif repeat units follow at residues 146–153 (CDVCDGSG), 163–170 (CGTCHGQG), 185–192 (CPTCHGRG), and 199–206 (CTKCHGDG).

Belongs to the DnaJ family. Homodimer. Requires Zn(2+) as cofactor.

Its subcellular location is the cytoplasm. Participates actively in the response to hyperosmotic and heat shock by preventing the aggregation of stress-denatured proteins and by disaggregating proteins, also in an autonomous, DnaK-independent fashion. Unfolded proteins bind initially to DnaJ; upon interaction with the DnaJ-bound protein, DnaK hydrolyzes its bound ATP, resulting in the formation of a stable complex. GrpE releases ADP from DnaK; ATP binding to DnaK triggers the release of the substrate protein, thus completing the reaction cycle. Several rounds of ATP-dependent interactions between DnaJ, DnaK and GrpE are required for fully efficient folding. Also involved, together with DnaK and GrpE, in the DNA replication of plasmids through activation of initiation proteins. In Shewanella sp. (strain MR-4), this protein is Chaperone protein DnaJ.